The following is a 291-amino-acid chain: Small ribosomal subunit biogenesis GTPase RsgA (291 aa).

The CP-type G domain maps to glutamine 63–leucine 221. GTP contacts are provided by residues threonine 112–aspartate 115 and glycine 164–threonine 172. Zn(2+)-binding residues include cysteine 245, cysteine 250, histidine 252, and cysteine 258.

This sequence belongs to the TRAFAC class YlqF/YawG GTPase family. RsgA subfamily. Monomer. Associates with 30S ribosomal subunit, binds 16S rRNA. Zn(2+) is required as a cofactor.

It is found in the cytoplasm. Functionally, one of several proteins that assist in the late maturation steps of the functional core of the 30S ribosomal subunit. Helps release RbfA from mature subunits. May play a role in the assembly of ribosomal proteins into the subunit. Circularly permuted GTPase that catalyzes slow GTP hydrolysis, GTPase activity is stimulated by the 30S ribosomal subunit. The protein is Small ribosomal subunit biogenesis GTPase RsgA of Staphylococcus carnosus (strain TM300).